The primary structure comprises 1254 residues: Ubiquitin carboxyl-terminal hydrolase 12 (1254 aa).

Position 84 is a phosphoserine (serine 84). The 103-residue stretch at 97-199 (NVLEQQRDVV…GSYPVVTNLV (103 aa)) folds into the DUSP domain. In terms of domain architecture, USP spans 364-1110 (TGLVNLGNTC…SAYLLFYIRR (747 aa)). Residue cysteine 373 is the Nucleophile of the active site. The segment at 827–893 (DEGDTEGSEA…EPELTDKPEA (67 aa)) is disordered. Residues 854 to 864 (TVTNNENVNNT) are compositionally biased toward low complexity. Residues 867–883 (RDEDMELTDDVEEDAST) are compositionally biased toward acidic residues. The active-site Proton acceptor is the histidine 1068. Serine 1160 carries the phosphoserine modification. Positions 1188–1207 (QDCNDEDDNDDGERTNSGRR) are disordered. Residues 1189–1198 (DCNDEDDNDD) are compositionally biased toward acidic residues.

This sequence belongs to the peptidase C19 family. As to quaternary structure, interacts with FZO1.

It carries out the reaction Thiol-dependent hydrolysis of ester, thioester, amide, peptide and isopeptide bonds formed by the C-terminal Gly of ubiquitin (a 76-residue protein attached to proteins as an intracellular targeting signal).. In terms of biological role, ubiquitin carboxyl-terminal hydrolase that recognizes ubiquitin chains that stabilize FZO1 and promote mitochondrial fusion. UBP12 deubiquitylates FZO1 only after oligomerization. This Saccharomyces cerevisiae (strain ATCC 204508 / S288c) (Baker's yeast) protein is Ubiquitin carboxyl-terminal hydrolase 12 (UBP12).